A 35-amino-acid chain; its full sequence is Photosystem II reaction center protein M (35 aa).

Residues 7 to 27 form a helical membrane-spanning segment; it reads GFIATILFVLVPTVFLLILYI.

It belongs to the PsbM family. As to quaternary structure, PSII is composed of 1 copy each of membrane proteins PsbA, PsbB, PsbC, PsbD, PsbE, PsbF, PsbH, PsbI, PsbJ, PsbK, PsbL, PsbM, PsbT, PsbX, PsbY, PsbZ, Psb30/Ycf12, peripheral proteins PsbO, CyanoQ (PsbQ), PsbU, PsbV and a large number of cofactors. It forms dimeric complexes.

The protein localises to the cellular thylakoid membrane. Its function is as follows. One of the components of the core complex of photosystem II (PSII). PSII is a light-driven water:plastoquinone oxidoreductase that uses light energy to abstract electrons from H(2)O, generating O(2) and a proton gradient subsequently used for ATP formation. It consists of a core antenna complex that captures photons, and an electron transfer chain that converts photonic excitation into a charge separation. This subunit is found at the monomer-monomer interface. The protein is Photosystem II reaction center protein M of Gloeothece citriformis (strain PCC 7424) (Cyanothece sp. (strain PCC 7424)).